Here is a 543-residue protein sequence, read N- to C-terminus: Fiber protein (543 aa).

Residues 1–36 (MKRTRRSLPANFDPVYPYDAPKPSTQPPFFNDRKGL) form a disordered region.

The protein belongs to the adenoviridae fiber family. As to quaternary structure, homotrimer. Interacts (via N-terminal tail region) with pentons.

It localises to the virion. Its subcellular location is the host nucleus. Functionally, forms spikes that protrude from each vertex of the icosahedral capsid. Interacts with host receptor to provide virion initial attachment to target cell. Fiber proteins are shed during virus entry, when virus is still at the cell surface. The polypeptide is Fiber protein (Canine adenovirus serotype 1 (strain CLL) (CAdV-1)).